Reading from the N-terminus, the 434-residue chain is Guanosine-inosine kinase (434 aa).

GMP contacts are provided by residues 40–45 (DQTLVD), 93–97 (GTIGN), and arginine 198. Residues 284–289 (TAGPIG), glycine 357, and asparagine 402 each bind ATP.

This sequence belongs to the carbohydrate kinase PfkB family. Mg(2+) serves as cofactor.

The catalysed reaction is guanosine + ATP = GMP + ADP + H(+). The enzyme catalyses inosine + ATP = IMP + ADP + H(+). It participates in purine metabolism; IMP biosynthesis via salvage pathway; IMP from inosine: step 1/1. The protein operates within purine metabolism; GMP biosynthesis via salvage pathway. In terms of biological role, catalyzes the phosphorylation of guanosine and inosine to GMP and IMP, respectively. In Escherichia coli O157:H7, this protein is Guanosine-inosine kinase.